The following is a 404-amino-acid chain: Multidrug resistance protein MdtH (404 aa).

Topologically, residues 1–12 are cytoplasmic; it reads MSRVSQARNLGK. A helical membrane pass occupies residues 13-33; that stretch reads YFLLIDNMLVVLGFFVVFPLI. Topologically, residues 34–98 are periplasmic; that stretch reads SIRFVDQMGW…GFATMGIAHE (65 aa). Residues 99–116 traverse the membrane as a helical segment; the sequence is PWLLWFSCFLSGLGGTLF. Over 117–138 the chain is Cytoplasmic; the sequence is DPPRSALVVKLIRPEQRGRFFS. The helical transmembrane segment at 139–159 threads the bilayer; sequence LLMMQDSAGAVIGALLGSWLL. Residues 160-164 are Periplasmic-facing; that stretch reads QYDFR. Residues 165–185 traverse the membrane as a helical segment; the sequence is LVCAMGAILFIVCAIFNAWLL. Residues 186-213 are Cytoplasmic-facing; it reads PAWKLSTVRTPVREGMRRVISDKRFVTY. The chain crosses the membrane as a helical span at residues 214–234; that stretch reads VLTLAGYYMLAVQVMLMLPIM. At 235-243 the chain is on the periplasmic side; the sequence is VNDVAGSPA. Residues 244–264 traverse the membrane as a helical segment; the sequence is AVKWMYAIEACLSLTLLYPIA. The Cytoplasmic segment spans residues 265–276; the sequence is RWSEKRFRLEHR. A helical transmembrane segment spans residues 277–297; that stretch reads LMAGLLIMSLSMIPIGLAGNL. At 298 to 299 the chain is on the periplasmic side; sequence QQ. A helical transmembrane segment spans residues 300–320; sequence LFTLICAFYIGSVIAEPARET. The Cytoplasmic portion of the chain corresponds to 321-339; sequence LSASLTDARARGSYMGFSR. Residues 340 to 360 traverse the membrane as a helical segment; the sequence is LGLAIGGAIGYIGGGWLFDMG. The Periplasmic portion of the chain corresponds to 361–367; the sequence is KTLAQPE. Residues 368-388 traverse the membrane as a helical segment; sequence LPWMMLGIIGFITFLALGWQF. At 389–404 the chain is on the cytoplasmic side; that stretch reads SHKRTPRQYTGARRLI.

It belongs to the major facilitator superfamily. DHA1 family. MdtH (TC 2.A.1.2.21) subfamily.

The protein localises to the cell inner membrane. In Salmonella arizonae (strain ATCC BAA-731 / CDC346-86 / RSK2980), this protein is Multidrug resistance protein MdtH.